A 259-amino-acid polypeptide reads, in one-letter code: 3-oxo-5-alpha-steroid 4-dehydrogenase 1 (259 aa).

5 helical membrane passes run 12-29 (LLAALAYLQCAVGCAVFA), 86-106 (ILLAMFLVHYGHRCLIYPFLM), 111-131 (PMPLLACTMAIMFCTCNGYLQ), 151-171 (FLIGFGLWLTGMLINIHSDHI), and 209-229 (YALASWSVQGAAFAFFTFCFL).

Belongs to the steroid 5-alpha reductase family. In terms of tissue distribution, liver and prostate (at a low level).

It is found in the microsome membrane. The protein localises to the endoplasmic reticulum membrane. The catalysed reaction is a 3-oxo-5alpha-steroid + NADP(+) = a 3-oxo-Delta(4)-steroid + NADPH + H(+). It catalyses the reaction androst-4-ene-3,17-dione + NADPH + H(+) = 5alpha-androstan-3,17-dione + NADP(+). The enzyme catalyses 5alpha-pregnane-3,20-dione + NADP(+) = progesterone + NADPH + H(+). It carries out the reaction 17beta-hydroxy-5alpha-androstan-3-one + NADP(+) = testosterone + NADPH + H(+). In terms of biological role, converts testosterone into 5-alpha-dihydrotestosterone and progesterone or corticosterone into their corresponding 5-alpha-3-oxosteroids. It plays a central role in sexual differentiation and androgen physiology. This is 3-oxo-5-alpha-steroid 4-dehydrogenase 1 from Homo sapiens (Human).